A 303-amino-acid polypeptide reads, in one-letter code: Probable cell division protein WhiA (303 aa).

The H-T-H motif DNA-binding region spans 272–303 (SIQQIADSIEPPLTKSGVNHRLRKINKIADDL).

The protein belongs to the WhiA family.

In terms of biological role, involved in cell division and chromosome segregation. The polypeptide is Probable cell division protein WhiA (Streptococcus thermophilus (strain ATCC BAA-250 / LMG 18311)).